A 107-amino-acid polypeptide reads, in one-letter code: Pro-corazonin (107 aa).

The N-terminal stretch at 1-21 (MVNSQILILFILSLTITIVMC) is a signal peptide. At Gln22 the chain carries Pyrrolidone carboxylic acid. Residue Asn32 is modified to Asparagine amide. Residues 88–107 (SFSENMINDHRQPAPTNNNY) constitute a propeptide that is removed on maturation.

Belongs to the corazonin family. In the adult brain, expressed in four neurons of the lateral protocerebrum project axons towards the retrocerebral complex.

Its subcellular location is the secreted. Its function is as follows. Cardioactive peptide. Corazonin is probably involved in the physiological regulation of the heart beat. This Apis mellifera (Honeybee) protein is Pro-corazonin.